Consider the following 137-residue polypeptide: MPEATGLMAHNWGFAIFLLGVVGLCAFMLGVSSLLGSKAWGRSKNEPFESGMLPTGGARLRLSAKFYLVAMLFVIFDIEALFLFAWSVSVRESGWTGFVEALVFIAILLAGLVYLFRVGALDWAPEARRKRQAKLKQ.

Transmembrane regions (helical) follow at residues tryptophan 12–serine 32, phenylalanine 66–tryptophan 86, and threonine 96–phenylalanine 116.

Belongs to the complex I subunit 3 family. In terms of assembly, NDH-1 is composed of 13 different subunits. Subunits NuoA, H, J, K, L, M, N constitute the membrane sector of the complex.

It is found in the cell inner membrane. It catalyses the reaction a quinone + NADH + 5 H(+)(in) = a quinol + NAD(+) + 4 H(+)(out). In terms of biological role, NDH-1 shuttles electrons from NADH, via FMN and iron-sulfur (Fe-S) centers, to quinones in the respiratory chain. The immediate electron acceptor for the enzyme in this species is believed to be ubiquinone. Couples the redox reaction to proton translocation (for every two electrons transferred, four hydrogen ions are translocated across the cytoplasmic membrane), and thus conserves the redox energy in a proton gradient. This chain is NADH-quinone oxidoreductase subunit A, found in Pseudomonas fluorescens (strain Pf0-1).